A 595-amino-acid polypeptide reads, in one-letter code: Putative capsid protein V20 (595 aa).

The protein localises to the virion. May self assemble to form an icosahedral capsid. Most abundant protein in the virion. This Sputnik virophage protein is Putative capsid protein V20.